A 1628-amino-acid chain; its full sequence is Lysine-specific histone demethylase 1 homolog 3 (1628 aa).

The tract at residues 1-71 (MDGKEKKSGS…KKLSALGKDS (71 aa)) is disordered. A compositionally biased stretch (acidic residues) spans 19 to 28 (FDDDADDDEP). A compositionally biased stretch (basic and acidic residues) spans 43-64 (KDKVETESTGKQRQKQVVEKKL). Residues 378–478 (GRAAAVTAGL…AGISSVNGKA (101 aa)) enclose the SWIRM domain. Residues E647, R649, R655, and E1077 each contribute to the FAD site. Positions 1271–1317 (SGKKSLRQANTTNTSRIRRKLNSPDTDSKGKLSNGNDVKTDEEFEDN) are disordered.

It belongs to the flavin monoamine oxidase family. It depends on FAD as a cofactor.

Probable histone demethylase that reduces the levels of histone H3 'Lys-4' methylation in chromatin. This is Lysine-specific histone demethylase 1 homolog 3 (LDL3) from Arabidopsis thaliana (Mouse-ear cress).